The sequence spans 394 residues: Chaperone protein DnaJ (394 aa).

The J domain maps to 5–75; the sequence is DYYEVLGVDK…EKKQQYDQFG (71 aa). Residues 150–231 form a CR-type zinc finger; it reads GVEKTIKYKR…CRGTGTAKET (82 aa). Residues Cys-163, Cys-166, Cys-179, Cys-182, Cys-205, Cys-208, Cys-219, and Cys-222 each contribute to the Zn(2+) site. CXXCXGXG motif repeat units follow at residues 163–170, 179–186, 205–212, and 219–226; these read CEHCHGTG, CPTCNGQG, CPDCHGTG, and CKHCRGTG.

This sequence belongs to the DnaJ family. In terms of assembly, homodimer. Zn(2+) serves as cofactor.

The protein localises to the cytoplasm. Participates actively in the response to hyperosmotic and heat shock by preventing the aggregation of stress-denatured proteins and by disaggregating proteins, also in an autonomous, DnaK-independent fashion. Unfolded proteins bind initially to DnaJ; upon interaction with the DnaJ-bound protein, DnaK hydrolyzes its bound ATP, resulting in the formation of a stable complex. GrpE releases ADP from DnaK; ATP binding to DnaK triggers the release of the substrate protein, thus completing the reaction cycle. Several rounds of ATP-dependent interactions between DnaJ, DnaK and GrpE are required for fully efficient folding. Also involved, together with DnaK and GrpE, in the DNA replication of plasmids through activation of initiation proteins. This Fusobacterium nucleatum subsp. polymorphum (Fusobacterium polymorphum) protein is Chaperone protein DnaJ.